The primary structure comprises 500 residues: Glutamyl-tRNA(Gln) amidotransferase subunit A (500 aa).

Residues lysine 93 and serine 168 each act as charge relay system in the active site. The active-site Acyl-ester intermediate is serine 192.

The protein belongs to the amidase family. GatA subfamily. Heterotrimer of A, B and C subunits.

The catalysed reaction is L-glutamyl-tRNA(Gln) + L-glutamine + ATP + H2O = L-glutaminyl-tRNA(Gln) + L-glutamate + ADP + phosphate + H(+). In terms of biological role, allows the formation of correctly charged Gln-tRNA(Gln) through the transamidation of misacylated Glu-tRNA(Gln) in organisms which lack glutaminyl-tRNA synthetase. The reaction takes place in the presence of glutamine and ATP through an activated gamma-phospho-Glu-tRNA(Gln). The polypeptide is Glutamyl-tRNA(Gln) amidotransferase subunit A (Corynebacterium jeikeium (strain K411)).